A 785-amino-acid chain; its full sequence is E3 UFM1-protein ligase 1 homolog (785 aa).

Residues 404-482 form a disordered region; sequence NASFQDQDDD…AGGGGGNKKT (79 aa).

Belongs to the UFL1 family.

Its function is as follows. E3 UFM1-protein ligase that mediates ufmylation of target proteins. The protein is E3 UFM1-protein ligase 1 homolog of Drosophila persimilis (Fruit fly).